The following is a 160-amino-acid chain: MKKRTTQAKKSGQNTNIRDVFPHVVRSNSSQSHIGKKVSSEQSPTPDVTITTKTLDERIKEDDELSKEVEEAWNQIMAERISEPIHCENITKVEFILHHFDTTARYGPYLGMTRMQRWKRAKNFNLNPPETVGKILMLEEADEENRKRESLFYDLQTIPG.

The segment at Met1 to Val48 is disordered. A compositionally biased stretch (polar residues) spans Ala8–Ile17.

It belongs to the DNA polymerase delta subunit 4 family. Heterotetramer that consist of the pol3, cdc1, cdc27 and cdm1 subunits. Interacts with cdc1 and pol3.

It is found in the nucleus. Its function is as follows. Appears to have a role in the stabilization of the DNA polymerase delta complex. This Schizosaccharomyces pombe (strain 972 / ATCC 24843) (Fission yeast) protein is DNA polymerase delta subunit 4 (cdm1).